The following is a 182-amino-acid chain: ATP synthase subunit delta (182 aa).

It belongs to the ATPase delta chain family. As to quaternary structure, F-type ATPases have 2 components, F(1) - the catalytic core - and F(0) - the membrane proton channel. F(1) has five subunits: alpha(3), beta(3), gamma(1), delta(1), epsilon(1). F(0) has three main subunits: a(1), b(2) and c(10-14). The alpha and beta chains form an alternating ring which encloses part of the gamma chain. F(1) is attached to F(0) by a central stalk formed by the gamma and epsilon chains, while a peripheral stalk is formed by the delta and b chains.

The protein resides in the cell inner membrane. Functionally, f(1)F(0) ATP synthase produces ATP from ADP in the presence of a proton or sodium gradient. F-type ATPases consist of two structural domains, F(1) containing the extramembraneous catalytic core and F(0) containing the membrane proton channel, linked together by a central stalk and a peripheral stalk. During catalysis, ATP synthesis in the catalytic domain of F(1) is coupled via a rotary mechanism of the central stalk subunits to proton translocation. In terms of biological role, this protein is part of the stalk that links CF(0) to CF(1). It either transmits conformational changes from CF(0) to CF(1) or is implicated in proton conduction. This Sulfurihydrogenibium sp. (strain YO3AOP1) protein is ATP synthase subunit delta.